A 171-amino-acid polypeptide reads, in one-letter code: Large ribosomal subunit protein uL10 (171 aa).

This sequence belongs to the universal ribosomal protein uL10 family. As to quaternary structure, part of the ribosomal stalk of the 50S ribosomal subunit. The N-terminus interacts with L11 and the large rRNA to form the base of the stalk. The C-terminus forms an elongated spine to which L12 dimers bind in a sequential fashion forming a multimeric L10(L12)X complex.

In terms of biological role, forms part of the ribosomal stalk, playing a central role in the interaction of the ribosome with GTP-bound translation factors. The chain is Large ribosomal subunit protein uL10 from Methylocella silvestris (strain DSM 15510 / CIP 108128 / LMG 27833 / NCIMB 13906 / BL2).